Here is a 353-residue protein sequence, read N- to C-terminus: uncharacterized protein (353 aa).

5 residues coordinate Mn(2+): Asp212, Asp223, His287, Glu316, and Glu330.

It belongs to the peptidase M24B family. The cofactor is Mn(2+).

This is an uncharacterized protein from Bacillus subtilis (strain 168).